A 370-amino-acid chain; its full sequence is MGGGDGAAFKRPGDGARLQRVLGLGSRREPRSLPAGGPAPRRTAPPPPGHASAGPAAMSSHIAKSESKTSLLKAAAAAASGGSRAPRHGPARDPGLPSRRLPGSCPATPQSSGDPSSRRPLCRPAPREEGARGSQRVLPQAHCRPREALPAAASRPSPSSPLPPARGRDGEERGLSPALGLRGSLRARGRGDSVPAAASEADPFLHRLRPMLSSAFGQDRSLRPEEIEELREAFREFDKDKDGYINCRDLGNCMRTMGYMPTEMELIELSQQINMNLGGHVDFDDFVELMGPKLLAETADMIGVKELRDAFREFDTNGDGEISTSELREAMRKLLGHQVGHRDIEEIIRDVDLNGDGRVDFEEFVRMMSR.

A disordered region spans residues M1–A198. A lipid anchor (N-myristoyl glycine) is attached at G2. G4 carries the S-palmitoyl cysteine lipid modification. 3 stretches are compositionally biased toward low complexity: residues H50–H61, K68–R84, and A148–S157. 4 consecutive EF-hand domains span residues E225–M260, G279–A296, I302–H337, and V339–R370. Ca(2+) is bound by residues D238, D240, D242, Y244, and D249. 4 residues coordinate Mg(2+): D238, D240, D242, and Y244. D315, N317, D319, and E321 together coordinate Ca(2+). Phosphoserine is present on S323. Ca(2+) is bound by residues E326, D352, L353, N354, D356, G357, R358, D360, and E363.

In terms of assembly, homodimer; when bound to calcium or magnesium. Interacts (via C-terminus) with ITPR1, ITPR2 and ITPR3. This binding is calcium dependent and the interaction correlates with calcium concentration. An additional calcium-independent interaction with the N-terminus of ITPR1 results in a decreased InsP(3) binding to the receptor. Interacts with CACNA1A (via C-terminal CDB motif) in the pre- and postsynaptic membranes. Interacts with CACNA1C (via C-terminal C and IQ motifs). The binding to the C motif is calcium independent whereas the binding to IQ requires the presence of calcium and is mutually exclusive with calmodulin binding. Interacts with CACNA1D. Interacts with TRPC5 (via C-terminus). Interacts (via EF-hands 1 and 2) at microtubules with MAP1LC3B. Interacts with MYO1C. Interacts (via EF-hands 1 and 2) with NSMF (via the central NLS-containing motif region), the interaction occurs in a calcium dependent manner after synaptic NMDA receptor stimulation and prevents nuclear import of NSMF. Interacts with SPACA9. In terms of processing, phosphorylated. The phosphorylation regulates the activity. In terms of tissue distribution, retina and brain. Somatodendritic compartment of neurons. Calbrain was found exclusively in brain where it is abundant in the hippocampus, habenular area in the epithalamus and in the cerebellum.

It is found in the cytoplasm. It localises to the cytoskeleton. Its subcellular location is the perinuclear region. The protein localises to the cell membrane. The protein resides in the golgi apparatus. It is found in the postsynaptic density. It localises to the cell cortex. Its function is as follows. Modulates calcium-dependent activity of inositol 1,4,5-triphosphate receptors (ITPRs). Inhibits agonist-induced intracellular calcium signaling. Enhances inactivation and does not support calcium-dependent facilitation of voltage-dependent P/Q-type calcium channels. Causes calcium-dependent facilitation and inhibits inactivation of L-type calcium channels by binding to the same sites as calmodulin in the C-terminal domain of CACNA1C, but has an opposite effect on channel function. Suppresses the calcium-dependent inactivation of CACNA1D. Inhibits TRPC5 channels. Prevents NMDA receptor-induced cellular degeneration. Required for the normal transfer of light signals through the retina. In Homo sapiens (Human), this protein is Calcium-binding protein 1 (CABP1).